The sequence spans 459 residues: Peptidyl-prolyl cis-trans isomerase FKBP4 (459 aa).

M1 is subject to N-acetylmethionine; in peptidyl-prolyl cis-trans isomerase FKBP4; alternate. A disordered region spans residues 1–22 (MTAEETKAAESGAQSAPLRLEG). N-acetylthreonine; in peptidyl-prolyl cis-trans isomerase FKBP4, N-terminally processed; partial is present on T2. The region spanning 50–138 (GDRVFVHYTG…VFEVELFEFK (89 aa)) is the PPIase FKBP-type 1 domain. A Phosphothreonine modification is found at T143. In terms of domain architecture, PPIase FKBP-type 2 spans 167–253 (GALVEVALEG…KYEIHLKSFE (87 aa)). The residue at position 220 (Y220) is a Phosphotyrosine. Positions 267–400 (LEQSTIVKER…AQLVVCQQRI (134 aa)) are interaction with tubulin. TPR repeat units follow at residues 270–303 (STIVKERGTVYFKEGKYKQAVLQYKKIVSWLEYE), 319–352 (LASHLNLAMCHLKLQAFSAAIENCNKALELDSNN), and 354–386 (KGLFRRGEAHLAVNDFDLARADFQKVLQLYPSN). N6-acetyllysine is present on K282. An Omega-N-methylarginine modification is found at R373. The disordered stretch occupies residues 423-459 (TKAKATVAAGDQPADAEMRDEPKNDVAGGQPQVEAEA).

Homodimer. Interacts with GLMN. Associates with HSP90AA1 and HSP70 in steroid hormone receptor complexes. Also interacts with peroxisomal phytanoyl-CoA alpha-hydroxylase (PHYH). Interacts with NR3C1 and dynein. Interacts with HSF1 in the HSP90 complex. Associates with tubulin. Interacts with MAPT/TAU. Interacts (via TPR domain) with S100A1, S100A2 and S100A6; the interaction is Ca(2+) dependent. Interaction with S100A1 and S100A2 (but not with S100A6) leads to inhibition of FKBP4-HSP90 interaction. Interacts with dynein; causes partially NR3C1 transport to the nucleus.

It localises to the cytoplasm. Its subcellular location is the cytosol. The protein resides in the mitochondrion. The protein localises to the nucleus. It is found in the cytoskeleton. The catalysed reaction is [protein]-peptidylproline (omega=180) = [protein]-peptidylproline (omega=0). With respect to regulation, inhibited by FK506. Functionally, immunophilin protein with PPIase and co-chaperone activities. Component of unligated steroid receptors heterocomplexes through interaction with heat-shock protein 90 (HSP90). May play a role in the intracellular trafficking of heterooligomeric forms of steroid hormone receptors between cytoplasm and nuclear compartments. The isomerase activity controls neuronal growth cones via regulation of TRPC1 channel opening. Also acts as a regulator of microtubule dynamics by inhibiting MAPT/TAU ability to promote microtubule assembly. May have a protective role against oxidative stress in mitochondria. The chain is Peptidyl-prolyl cis-trans isomerase FKBP4 (FKBP4) from Bos taurus (Bovine).